We begin with the raw amino-acid sequence, 228 residues long: Ribose-5-phosphate isomerase A (228 aa).

Residues 28–31 (TGST), 84–87 (DGAD), and 97–100 (KGGG) contribute to the substrate site. The active-site Proton acceptor is the E106. K124 contacts substrate.

Belongs to the ribose 5-phosphate isomerase family. In terms of assembly, homodimer.

The catalysed reaction is aldehydo-D-ribose 5-phosphate = D-ribulose 5-phosphate. Its pathway is carbohydrate degradation; pentose phosphate pathway; D-ribose 5-phosphate from D-ribulose 5-phosphate (non-oxidative stage): step 1/1. Functionally, catalyzes the reversible conversion of ribose-5-phosphate to ribulose 5-phosphate. In Levilactobacillus brevis (strain ATCC 367 / BCRC 12310 / CIP 105137 / JCM 1170 / LMG 11437 / NCIMB 947 / NCTC 947) (Lactobacillus brevis), this protein is Ribose-5-phosphate isomerase A.